Here is a 207-residue protein sequence, read N- to C-terminus: Large ribosomal subunit protein uL4 (207 aa).

A disordered region spans residues 47 to 78 (GTASSKTRAEVRGGGKKPWRQKGTGRARVGSS). The span at 60 to 71 (GGKKPWRQKGTG) shows a compositional bias: basic residues.

The protein belongs to the universal ribosomal protein uL4 family. Part of the 50S ribosomal subunit.

Its function is as follows. One of the primary rRNA binding proteins, this protein initially binds near the 5'-end of the 23S rRNA. It is important during the early stages of 50S assembly. It makes multiple contacts with different domains of the 23S rRNA in the assembled 50S subunit and ribosome. In terms of biological role, forms part of the polypeptide exit tunnel. This Syntrophomonas wolfei subsp. wolfei (strain DSM 2245B / Goettingen) protein is Large ribosomal subunit protein uL4.